Reading from the N-terminus, the 306-residue chain is Aspartate carbamoyltransferase catalytic subunit (306 aa).

Residues Arg-54 and Thr-55 each contribute to the carbamoyl phosphate site. Lys-83 serves as a coordination point for L-aspartate. Arg-104, His-132, and Gln-135 together coordinate carbamoyl phosphate. The L-aspartate site is built by Arg-165 and Arg-227. Carbamoyl phosphate contacts are provided by Leu-266 and Pro-267.

This sequence belongs to the aspartate/ornithine carbamoyltransferase superfamily. ATCase family. Heterododecamer (2C3:3R2) of six catalytic PyrB chains organized as two trimers (C3), and six regulatory PyrI chains organized as three dimers (R2).

It carries out the reaction carbamoyl phosphate + L-aspartate = N-carbamoyl-L-aspartate + phosphate + H(+). The protein operates within pyrimidine metabolism; UMP biosynthesis via de novo pathway; (S)-dihydroorotate from bicarbonate: step 2/3. Its function is as follows. Catalyzes the condensation of carbamoyl phosphate and aspartate to form carbamoyl aspartate and inorganic phosphate, the committed step in the de novo pyrimidine nucleotide biosynthesis pathway. The protein is Aspartate carbamoyltransferase catalytic subunit of Clostridium kluyveri (strain NBRC 12016).